Consider the following 404-residue polypeptide: MLMSVFHNWLLEIACENYFVYIKRLSANDTGATGGHQVGLYIPSGIVEKLFPSINHTRELNPSVFLTAHVSSHDCPDSEARAIYYNSRHFGKTRNEKRITRWVEAAHFRILKITGALTLLAFKLDEQGGDCKEVNIWVCASTDEEDVIETAIGEVIPGALISGPAGQILGGLSLQQAPVNHKYILPEDWHLRFPSGSEIIQYAASHYVKNSLDPDEQLLDRRRVEYDIFLLVEELHVLDIIRKGFGSVDEFIALANSVSNRRKSRAGKSLELHLEHLFIEHGLRHFATQAITEGNKKPDFLFPSAGAYHDTEFPVENLRMLAVKTTCKDRWRQILNEADKIHQVHLFTLQEGVSLAQYREMRESGVRLVVPSSLHKKYPEAVRAELMTLGAFIAELTGLYADIP.

Tyr308 is an active-site residue.

As to quaternary structure, homodimer. It depends on Mg(2+) as a cofactor.

It carries out the reaction Endonucleolytic cleavage of DNA to give specific double-stranded fragments with terminal 5'-phosphates.. Its function is as follows. An E and P subtype restriction enzyme that recognizes the double-stranded sequence 5'-CCWGG-3' and cleaves before C-1. The protein is Type II restriction enzyme EcoRII (ecoRIIR) of Escherichia coli.